The following is a 505-amino-acid chain: Deoxyguanosinetriphosphate triphosphohydrolase (505 aa).

The HD domain occupies 66–273 (RLTHSMEVQQ…MEAADDISYC (208 aa)).

It belongs to the dGTPase family. Type 1 subfamily. Homotetramer. Requires Mg(2+) as cofactor.

It carries out the reaction dGTP + H2O = 2'-deoxyguanosine + triphosphate + H(+). Its function is as follows. dGTPase preferentially hydrolyzes dGTP over the other canonical NTPs. This chain is Deoxyguanosinetriphosphate triphosphohydrolase, found in Escherichia coli O81 (strain ED1a).